A 290-amino-acid chain; its full sequence is 4-hydroxy-tetrahydrodipicolinate synthase (290 aa).

Residue Thr48 participates in pyruvate binding. Tyr137 functions as the Proton donor/acceptor in the catalytic mechanism. The Schiff-base intermediate with substrate role is filled by Lys165. Pyruvate is bound at residue Ile206.

The protein belongs to the DapA family. In terms of assembly, homotetramer; dimer of dimers.

The protein localises to the cytoplasm. The enzyme catalyses L-aspartate 4-semialdehyde + pyruvate = (2S,4S)-4-hydroxy-2,3,4,5-tetrahydrodipicolinate + H2O + H(+). Its pathway is amino-acid biosynthesis; L-lysine biosynthesis via DAP pathway; (S)-tetrahydrodipicolinate from L-aspartate: step 3/4. Functionally, catalyzes the condensation of (S)-aspartate-beta-semialdehyde [(S)-ASA] and pyruvate to 4-hydroxy-tetrahydrodipicolinate (HTPA). In Ligilactobacillus salivarius (strain UCC118) (Lactobacillus salivarius), this protein is 4-hydroxy-tetrahydrodipicolinate synthase.